We begin with the raw amino-acid sequence, 502 residues long: ATP synthase subunit alpha, sodium ion specific (502 aa).

Residue 169–176 participates in ATP binding; it reads GDRQTGKT.

Belongs to the ATPase alpha/beta chains family. In terms of assembly, F-type ATPases have 2 components, CF(1) - the catalytic core - and CF(0) - the membrane proton channel. CF(1) has five subunits: alpha(3), beta(3), gamma(1), delta(1), epsilon(1). CF(0) has three main subunits: a, b and c.

Its subcellular location is the cell membrane. The catalysed reaction is 4 Na(+)(in) + ATP + H2O = 4 Na(+)(out) + ADP + phosphate + H(+). Its activity is regulated as follows. Inhibited by nitrate. Its function is as follows. Produces ATP from ADP in the presence of a sodium ion gradient across the membrane. The alpha chain is a regulatory subunit. The chain is ATP synthase subunit alpha, sodium ion specific from Acetobacterium woodii (strain ATCC 29683 / DSM 1030 / JCM 2381 / KCTC 1655 / WB1).